A 420-amino-acid chain; its full sequence is Exodeoxyribonuclease 7 large subunit (420 aa).

It belongs to the XseA family. As to quaternary structure, heterooligomer composed of large and small subunits.

It localises to the cytoplasm. It carries out the reaction Exonucleolytic cleavage in either 5'- to 3'- or 3'- to 5'-direction to yield nucleoside 5'-phosphates.. Its function is as follows. Bidirectionally degrades single-stranded DNA into large acid-insoluble oligonucleotides, which are then degraded further into small acid-soluble oligonucleotides. The polypeptide is Exodeoxyribonuclease 7 large subunit (Helicobacter pylori (strain Shi470)).